Reading from the N-terminus, the 304-residue chain is GMP synthase [glutamine-hydrolyzing] subunit B (304 aa).

One can recognise a GMPS ATP-PPase domain in the interval 2–183; it reads VKVEKFIPNA…LDLPEEICER (182 aa). 28-34 contacts ATP; sequence SGGVDSS.

As to quaternary structure, heterodimer composed of a glutamine amidotransferase subunit (A) and a GMP-binding subunit (B).

It catalyses the reaction XMP + L-glutamine + ATP + H2O = GMP + L-glutamate + AMP + diphosphate + 2 H(+). It functions in the pathway purine metabolism; GMP biosynthesis; GMP from XMP (L-Gln route): step 1/1. Its function is as follows. Catalyzes the synthesis of GMP from XMP. The polypeptide is GMP synthase [glutamine-hydrolyzing] subunit B (Methanococcoides burtonii (strain DSM 6242 / NBRC 107633 / OCM 468 / ACE-M)).